Reading from the N-terminus, the 184-residue chain is MDLPGNDFDSNDFDAVDLWGADGAEGWTADPIIGVGSAATPDTGPDLDNAHGQAETDTEQEIALFTVTNPPRTVSVSTLMDGRIDHVELSARVAWMSESQLASEILVIADLARQKAQSAQYAFILDRMSQQVDADEHRVALLRKTVGETWGLPSPEEAAAAEAEVFATRYSDDCPAPDDESDPW.

A disordered region spans residues 33–56; it reads IGVGSAATPDTGPDLDNAHGQAET.

The protein localises to the secreted. Its function is as follows. Required for ESX-1 function. Required for the maintenance of adequate cellular levels of both EspA and EspC. Facilitates EsxA secretion. This chain is ESX-1 secretion-associated protein EspD, found in Mycobacterium tuberculosis (strain CDC 1551 / Oshkosh).